Reading from the N-terminus, the 61-residue chain is Large ribosomal subunit protein uL30 (61 aa).

It belongs to the universal ribosomal protein uL30 family. Part of the 50S ribosomal subunit.

The chain is Large ribosomal subunit protein uL30 from Bordetella avium (strain 197N).